The primary structure comprises 64 residues: UPF0434 protein Oant_3286 (64 aa).

This sequence belongs to the UPF0434 family.

This chain is UPF0434 protein Oant_3286, found in Brucella anthropi (strain ATCC 49188 / DSM 6882 / CCUG 24695 / JCM 21032 / LMG 3331 / NBRC 15819 / NCTC 12168 / Alc 37) (Ochrobactrum anthropi).